The following is a 157-amino-acid chain: 2-C-methyl-D-erythritol 2,4-cyclodiphosphate synthase (157 aa).

Residues Asp-8 and His-10 each coordinate a divalent metal cation. 4-CDP-2-C-methyl-D-erythritol 2-phosphate is bound by residues 8 to 10 and 34 to 35; these read DVH and HS. His-42 is a binding site for a divalent metal cation. 4-CDP-2-C-methyl-D-erythritol 2-phosphate contacts are provided by residues 56 to 58, 61 to 65, 100 to 106, 132 to 135, Phe-139, and Arg-142; these read DIG, FPDTD, AQRPKMA, and TTTE.

The protein belongs to the IspF family. Homotrimer. It depends on a divalent metal cation as a cofactor.

It carries out the reaction 4-CDP-2-C-methyl-D-erythritol 2-phosphate = 2-C-methyl-D-erythritol 2,4-cyclic diphosphate + CMP. It participates in isoprenoid biosynthesis; isopentenyl diphosphate biosynthesis via DXP pathway; isopentenyl diphosphate from 1-deoxy-D-xylulose 5-phosphate: step 4/6. Functionally, involved in the biosynthesis of isopentenyl diphosphate (IPP) and dimethylallyl diphosphate (DMAPP), two major building blocks of isoprenoid compounds. Catalyzes the conversion of 4-diphosphocytidyl-2-C-methyl-D-erythritol 2-phosphate (CDP-ME2P) to 2-C-methyl-D-erythritol 2,4-cyclodiphosphate (ME-CPP) with a corresponding release of cytidine 5-monophosphate (CMP). This chain is 2-C-methyl-D-erythritol 2,4-cyclodiphosphate synthase, found in Geobacter sulfurreducens (strain ATCC 51573 / DSM 12127 / PCA).